A 262-amino-acid chain; its full sequence is Putative dimethyl sulfoxide reductase iron-sulfur subunit B (262 aa).

4Fe-4S ferredoxin-type domains follow at residues 4 to 34 (YGLVIDQERCIGCQSCSLTCKQENNVPMGQF), 62 to 93 (LEMTYQPTACQHCENAPCVKVCPVNATYTRDD), and 94 to 123 (GIVEIDYDKCMGCRYCMAACPYNARVFNWD). [4Fe-4S] cluster-binding residues include C13, C16, C19, C23, C71, C74, C79, C83, C103, C106, C109, C113, C147, C150, C162, and C166. Residues 209–262 (NGEMSPGRPWKSKKLESELDDDEAAKAARRRSGSVENGYDVTPHVPAETAGGDD) are disordered.

Probable multiprotein complex that likely consists of DmsA, DmsB and DmsC. [4Fe-4S] cluster serves as cofactor.

The protein localises to the cell membrane. Dimethyl sulfoxide (DMSO) reductase catalyzes the reduction of dimethyl sulfoxide (DMSO) to dimethyl sulfide (DMS) during anaerobic respiration; it can also use trimethylamine N-oxide (TMAO) as terminal electron acceptor. Subunit B is proposed to be involved in electron transfer. This chain is Putative dimethyl sulfoxide reductase iron-sulfur subunit B (dmsB), found in Halobacterium salinarum (strain ATCC 700922 / JCM 11081 / NRC-1) (Halobacterium halobium).